The following is a 360-amino-acid chain: Inward rectifier potassium channel 13 (360 aa).

Residues 1-50 (MDSRNCKVNAPLLSQRYRRMVTKDGHSTLQMDGAQRGLVYLRDAWGILMD) are Cytoplasmic-facing. A helical transmembrane segment spans residues 51–77 (MRWRWMMLVFSASFVVHWLVFAVLWYA). The Extracellular segment spans residues 78–105 (VAEMNGDLEIDHDVPPENHTICVKHITS). Positions 106–122 (FTAAFSFSLETQLTIGY) form an intramembrane region, helical; Pore-forming. The Selectivity filter motif lies at 119-124 (TIGYGT). The Extracellular portion of the chain corresponds to 123-131 (GTMFPSGDC). The chain crosses the membrane as a helical span at residues 132–157 (PSAIALLAIQMLLGLMLEAFITGAFV). Topologically, residues 158–360 (AKIARPKNRA…FQIAETGLTE (203 aa)) are cytoplasmic. A Phosphoserine; by PKC modification is found at Ser-201. At Ser-287 the chain carries Phosphoserine; by PKA.

Belongs to the inward rectifier-type potassium channel (TC 1.A.2.1) family. KCNJ13 subfamily. In terms of assembly, homotetramer. Interacts with RAB28; the interaction may facilitate cone outer segments phagocytosis. In terms of processing, phosphorylation at Ser-201 by PKC strongly inhibits ionic currents, while phosphorylation at Ser-287 by PKA increases them.

It localises to the membrane. It is found in the cell membrane. It carries out the reaction K(+)(in) = K(+)(out). Its activity is regulated as follows. Inhibited by Ba(2+) and Cs(+), although sensitivity to those inhibitors is much lower than in other Kir channels. Its function is as follows. Inward rectifier potassium channels are characterized by a greater tendency to allow potassium to flow into the cell rather than out of it. Their voltage dependence is regulated by the concentration of extracellular potassium; as external potassium is raised, the voltage range of the channel opening shifts to more positive voltages. The inward rectification is mainly due to the blockage of outward current by internal magnesium. KCNJ13 has a very low single channel conductance, low sensitivity to block by external barium and cesium, and no dependence of its inward rectification properties on the internal blocking particle magnesium. This Rattus norvegicus (Rat) protein is Inward rectifier potassium channel 13 (Kcnj13).